We begin with the raw amino-acid sequence, 405 residues long: Exodeoxyribonuclease 7 large subunit (405 aa).

Belongs to the XseA family. As to quaternary structure, heterooligomer composed of large and small subunits.

The protein localises to the cytoplasm. It catalyses the reaction Exonucleolytic cleavage in either 5'- to 3'- or 3'- to 5'-direction to yield nucleoside 5'-phosphates.. In terms of biological role, bidirectionally degrades single-stranded DNA into large acid-insoluble oligonucleotides, which are then degraded further into small acid-soluble oligonucleotides. In Syntrophomonas wolfei subsp. wolfei (strain DSM 2245B / Goettingen), this protein is Exodeoxyribonuclease 7 large subunit.